A 323-amino-acid polypeptide reads, in one-letter code: Sphingolipid delta(4)-desaturase/C4-monooxygenase DES2 (323 aa).

Residue glycine 2 is the site of N-myristoyl glycine attachment. The next 2 helical transmembrane spans lie at 41–61 and 68–88; these read PNIK…CWLV and WLLF…TLAI. The Histidine box-1 motif lies at 89 to 93; sequence HDISH. Residues 95–99 are required for C4-hydroxylase activity; it reads TAFGT. The short motif at 128–132 is the Histidine box-2 element; it reads HVDHH. The helical transmembrane segment at 200 to 220 threads the bilayer; it reads IFALWGIKAIVYLLASSLLGL. Residues 259–263 carry the Histidine box-3 motif; sequence HVEHH.

This sequence belongs to the fatty acid desaturase type 1 family. DEGS subfamily.

The protein resides in the endoplasmic reticulum membrane. It carries out the reaction a dihydroceramide + 2 Fe(II)-[cytochrome b5] + O2 + 2 H(+) = a phytoceramide + 2 Fe(III)-[cytochrome b5] + H2O. The enzyme catalyses an N-acylsphinganine + 2 Fe(II)-[cytochrome b5] + O2 + 2 H(+) = an N-acylsphing-4-enine + 2 Fe(III)-[cytochrome b5] + 2 H2O. The catalysed reaction is N-octanoylsphinganine + 2 Fe(II)-[cytochrome b5] + O2 + 2 H(+) = N-octanoyl-4-hydroxysphinganine + 2 Fe(III)-[cytochrome b5] + H2O. It catalyses the reaction an N-acylsphinganine + 2 Fe(II)-[cytochrome b5] + O2 + 2 H(+) = an N-acyl-(4R)-4-hydroxysphinganine + 2 Fe(III)-[cytochrome b5] + H2O. It functions in the pathway membrane lipid metabolism; sphingolipid biosynthesis. Its function is as follows. Bifunctional enzyme which acts both as a sphingolipid delta(4)-desaturase and a sphingolipid C4-monooxygenase. The polypeptide is Sphingolipid delta(4)-desaturase/C4-monooxygenase DES2 (Rattus norvegicus (Rat)).